A 284-amino-acid polypeptide reads, in one-letter code: 2-dehydro-3-deoxyphosphooctonate aldolase (284 aa).

This sequence belongs to the KdsA family.

It is found in the cytoplasm. It catalyses the reaction D-arabinose 5-phosphate + phosphoenolpyruvate + H2O = 3-deoxy-alpha-D-manno-2-octulosonate-8-phosphate + phosphate. The protein operates within carbohydrate biosynthesis; 3-deoxy-D-manno-octulosonate biosynthesis; 3-deoxy-D-manno-octulosonate from D-ribulose 5-phosphate: step 2/3. It participates in bacterial outer membrane biogenesis; lipopolysaccharide biosynthesis. This is 2-dehydro-3-deoxyphosphooctonate aldolase from Salmonella paratyphi A (strain ATCC 9150 / SARB42).